The sequence spans 212 residues: WAP four-disulfide core domain protein 1 (212 aa).

An N-terminal signal peptide occupies residues 1–26 (MGSCDRKALWALSFLLLLLGSSSVQG). Residues 43–62 (EEVAATGSRQPHADRCPPPP) are disordered. Positions 51 to 100 (RQPHADRCPPPPRTLPPGACQATRCQSDSECPRHRRCCYNGCAYACLEAV) constitute a WAP domain. Cystine bridges form between Cys58/Cys88, Cys70/Cys92, Cys75/Cys87, and Cys81/Cys96. The disordered stretch occupies residues 191–212 (EYPEGDSKYVAEPGKGQQRHFP).

As to expression, vascular smooth muscle and prostate. Periacinar ring.

The protein localises to the secreted. Its function is as follows. Has growth inhibitory activity. The chain is WAP four-disulfide core domain protein 1 (Wfdc1) from Rattus norvegicus (Rat).